Consider the following 644-residue polypeptide: Forkhead box protein O (644 aa).

The disordered stretch occupies residues 39–75; that stretch reads FEPQTRARSNTWPCPRPENFVEPPDELDSTKASNQQL. At threonine 49 the chain carries Phosphothreonine; by PKB/AKT1. Serine 80 bears the Phosphoserine mark. A DNA-binding region (fork-head) is located at residues 100-206; it reads WGNLSYADLI…ETSRYEKRRG (107 aa). Disordered regions lie at residues 187–210, 222–276, 329–386, 412–435, and 578–612; these read KSVR…RAKK, GLND…SPIR, QQQQ…QTLQ, SPNS…DSLN, and QQHL…NSSL. Serine 195 carries the post-translational modification Phosphoserine; by PKB/AKT1. Polar residues-rich tracts occupy residues 226-235 and 261-270; these read ATPSPSSSVS and RASSNASSCG. Position 264 is a phosphoserine; by PKB/AKT1 (serine 264). Phosphoserine occurs at positions 267, 268, and 273. Residues 329–340 show a composition bias toward low complexity; sequence QQQQQQQQQQQQ. The span at 350-359 shows a compositional bias: pro residues; it reads SQPPPPPYQP. The span at 360 to 374 shows a compositional bias: low complexity; the sequence is PQLQQQQQQQPSYSL. The span at 412–421 shows a compositional bias: polar residues; sequence SPNSVTTTMS.

Interacts with melt.

The protein localises to the cytoplasm. Its subcellular location is the nucleus. Transcription factor involved in the regulation of the insulin signaling pathway. Consistently activates both the downstream target Thor\d4EBP and the feedback control target InR. Involved in negative regulation of the cell cycle, modulating cell growth and proliferation. In response to cellular stresses, such as nutrient deprivation or increased levels of reactive oxygen species, foxo is activated and inhibits growth through the action of target genes such as Thor. Foxo activated in the adult fat body can regulate lifespan in adults; an insulin peptide itself may function as one secondary messenger of insulin-regulated aging. Also regulates Lip4, homolog of human acid lipases, thereby acting as a key modulator of lipid metabolism by insulin signaling and integrates insulin responses to glucose and lipid homeostasis. The chain is Forkhead box protein O from Drosophila pseudoobscura pseudoobscura (Fruit fly).